The sequence spans 228 residues: L-ribulose-5-phosphate 4-epimerase UlaF (228 aa).

Residues 26-27 (GN), 43-44 (SG), and 72-73 (SS) contribute to the substrate site. The Zn(2+) site is built by Asp74, His93, and His95. The Proton donor/acceptor role is filled by Asp118. Residue His167 participates in Zn(2+) binding. Tyr225 serves as the catalytic Proton donor/acceptor.

This sequence belongs to the aldolase class II family. AraD/FucA subfamily. The cofactor is Zn(2+).

The catalysed reaction is L-ribulose 5-phosphate = D-xylulose 5-phosphate. The protein operates within cofactor degradation; L-ascorbate degradation; D-xylulose 5-phosphate from L-ascorbate: step 4/4. Its function is as follows. Catalyzes the isomerization of L-ribulose 5-phosphate to D-xylulose 5-phosphate. Is involved in the anaerobic L-ascorbate utilization. This chain is L-ribulose-5-phosphate 4-epimerase UlaF, found in Salmonella paratyphi A (strain ATCC 9150 / SARB42).